A 759-amino-acid chain; its full sequence is Subtilisin-like serine-protease S (759 aa).

A signal peptide spans 1–22 (MGSAKILSFTLLLFVGYTLVHG). Positions 28-105 (YIVYMGDRSH…SVFESKMNKL (78 aa)) constitute an Inhibitor I9 domain. Positions 110–613 (SWDFLGLDTV…SGHVNPVASL (504 aa)) constitute a Peptidase S8 domain. The Charge relay system role is filled by Asp139. An N-linked (GlcNAc...) asparagine glycan is attached at Asn170. His215 acts as the Charge relay system in catalysis. N-linked (GlcNAc...) asparagine glycans are attached at residues Asn230 and Asn388. The PA domain maps to 390 to 462 (SFCKEHTLDP…MIGQDAVEEL (73 aa)). Ser545 functions as the Charge relay system in the catalytic mechanism. 3 N-linked (GlcNAc...) asparagine glycosylation sites follow: Asn593, Asn642, and Asn671.

The protein belongs to the peptidase S8 family.

Its subcellular location is the secreted. It localises to the extracellular space. It is found in the apoplast. Functionally, required for arbuscular mycorrhiza (AM) development during AM symbiosis with AM fungi (e.g. Glomeromycota intraradices). The protein is Subtilisin-like serine-protease S of Lotus japonicus (Lotus corniculatus var. japonicus).